Consider the following 309-residue polypeptide: MPIRVPDELPAVNFLREENVFVMTTSRASGQEIRPLKVLILNLMPKKIETENQFLRLLSNSPLQVDIQLLRIDSRESRNTPAEHLNNFYCNFEDIQEQNFDGLIVTGAPLGLVEFNDVAYWPQIKQVLEWSKDHVTSTLFVCWAVQAALNILYGIPKQTRTDKLSGVYEHHILHPHALLTRGFDDSFLAPHSRYADFPAALIRDYTDLEILAETEEGDAYLFASKDKRIAFVTGHPEYDAQTLAQEYFRDVEAGLGPEVPYNYFPHNDPQNTPRASWRSHGNLLFTNWLNYYVYQITPYDLRHMNPTLD.

Catalysis depends on Cys142, which acts as the Acyl-thioester intermediate. Residues Lys163 and Ser192 each contribute to the substrate site. The active-site Proton acceptor is His235. Glu237 is an active-site residue. Residue Arg249 participates in substrate binding.

This sequence belongs to the MetA family. As to quaternary structure, homodimer.

Its subcellular location is the cytoplasm. The catalysed reaction is L-homoserine + succinyl-CoA = O-succinyl-L-homoserine + CoA. It functions in the pathway amino-acid biosynthesis; L-methionine biosynthesis via de novo pathway; O-succinyl-L-homoserine from L-homoserine: step 1/1. Functionally, transfers a succinyl group from succinyl-CoA to L-homoserine, forming succinyl-L-homoserine. The sequence is that of Homoserine O-succinyltransferase from Escherichia coli O139:H28 (strain E24377A / ETEC).